The sequence spans 523 residues: 2,3-bisphosphoglycerate-independent phosphoglycerate mutase (523 aa).

Aspartate 13 and serine 63 together coordinate Mn(2+). Serine 63 serves as the catalytic Phosphoserine intermediate. Substrate contacts are provided by residues histidine 124, 156–157, arginine 188, arginine 194, 268–271, and lysine 341; these read RD and RSDR. The Mn(2+) site is built by aspartate 408, histidine 412, aspartate 449, histidine 450, and histidine 467.

Belongs to the BPG-independent phosphoglycerate mutase family. As to quaternary structure, monomer. Mn(2+) is required as a cofactor.

It catalyses the reaction (2R)-2-phosphoglycerate = (2R)-3-phosphoglycerate. The protein operates within carbohydrate degradation; glycolysis; pyruvate from D-glyceraldehyde 3-phosphate: step 3/5. Its function is as follows. Catalyzes the interconversion of 2-phosphoglycerate and 3-phosphoglycerate. This Salinibacter ruber (strain DSM 13855 / M31) protein is 2,3-bisphosphoglycerate-independent phosphoglycerate mutase.